A 122-amino-acid chain; its full sequence is Urease subunit beta (122 aa).

It belongs to the urease beta subunit family. Heterotrimer of UreA (gamma), UreB (beta) and UreC (alpha) subunits. Three heterotrimers associate to form the active enzyme.

It localises to the cytoplasm. The catalysed reaction is urea + 2 H2O + H(+) = hydrogencarbonate + 2 NH4(+). It functions in the pathway nitrogen metabolism; urea degradation; CO(2) and NH(3) from urea (urease route): step 1/1. The protein is Urease subunit beta of Flavobacterium johnsoniae (strain ATCC 17061 / DSM 2064 / JCM 8514 / BCRC 14874 / CCUG 350202 / NBRC 14942 / NCIMB 11054 / UW101) (Cytophaga johnsonae).